A 169-amino-acid polypeptide reads, in one-letter code: Phosphopantetheine adenylyltransferase (169 aa).

Thr9 lines the substrate pocket. ATP is bound by residues 9–10 (TF) and His17. Substrate is bound by residues Lys41, Leu73, and Arg87. ATP-binding positions include 88 to 90 (GLR), Glu98, and 123 to 129 (YQFISGT).

Belongs to the bacterial CoaD family. Homohexamer. Requires Mg(2+) as cofactor.

The protein localises to the cytoplasm. The catalysed reaction is (R)-4'-phosphopantetheine + ATP + H(+) = 3'-dephospho-CoA + diphosphate. It participates in cofactor biosynthesis; coenzyme A biosynthesis; CoA from (R)-pantothenate: step 4/5. Reversibly transfers an adenylyl group from ATP to 4'-phosphopantetheine, yielding dephospho-CoA (dPCoA) and pyrophosphate. This chain is Phosphopantetheine adenylyltransferase, found in Bordetella bronchiseptica (strain ATCC BAA-588 / NCTC 13252 / RB50) (Alcaligenes bronchisepticus).